Consider the following 485-residue polypeptide: Glutamyl-tRNA(Gln) amidotransferase subunit A (485 aa).

Catalysis depends on charge relay system residues Lys80 and Ser155. Ser179 (acyl-ester intermediate) is an active-site residue.

This sequence belongs to the amidase family. GatA subfamily. Heterotrimer of A, B and C subunits.

It carries out the reaction L-glutamyl-tRNA(Gln) + L-glutamine + ATP + H2O = L-glutaminyl-tRNA(Gln) + L-glutamate + ADP + phosphate + H(+). Allows the formation of correctly charged Gln-tRNA(Gln) through the transamidation of misacylated Glu-tRNA(Gln) in organisms which lack glutaminyl-tRNA synthetase. The reaction takes place in the presence of glutamine and ATP through an activated gamma-phospho-Glu-tRNA(Gln). In Leptospira borgpetersenii serovar Hardjo-bovis (strain L550), this protein is Glutamyl-tRNA(Gln) amidotransferase subunit A.